Consider the following 369-residue polypeptide: Peptide chain release factor 2 (369 aa).

Q252 is subject to N5-methylglutamine.

It belongs to the prokaryotic/mitochondrial release factor family. Methylated by PrmC. Methylation increases the termination efficiency of RF2.

The protein resides in the cytoplasm. Its function is as follows. Peptide chain release factor 2 directs the termination of translation in response to the peptide chain termination codons UGA and UAA. The chain is Peptide chain release factor 2 from Staphylococcus aureus (strain MRSA252).